An 884-amino-acid chain; its full sequence is Alanine--tRNA ligase (884 aa).

4 residues coordinate Zn(2+): His572, His576, Cys673, and His677.

Belongs to the class-II aminoacyl-tRNA synthetase family. Zn(2+) serves as cofactor.

The protein resides in the cytoplasm. The enzyme catalyses tRNA(Ala) + L-alanine + ATP = L-alanyl-tRNA(Ala) + AMP + diphosphate. In terms of biological role, catalyzes the attachment of alanine to tRNA(Ala) in a two-step reaction: alanine is first activated by ATP to form Ala-AMP and then transferred to the acceptor end of tRNA(Ala). Also edits incorrectly charged Ser-tRNA(Ala) and Gly-tRNA(Ala) via its editing domain. The protein is Alanine--tRNA ligase of Xylella fastidiosa (strain M23).